The sequence spans 353 residues: Photosystem II protein D1 (353 aa).

At Thr-2 the chain carries N-acetylthreonine. Thr-2 is modified (phosphothreonine). 3 helical membrane passes run 29–46 (YIGW…TATS), 118–133 (HFLL…EWEL), and 142–156 (WIAV…AATA). His-118 contributes to the chlorophyll a binding site. Tyr-126 contributes to the pheophytin a binding site. Positions 170 and 189 each coordinate [CaMn4O5] cluster. Residues 197 to 218 (FHMLGVAGVFGGSLFSAMHGSL) form a helical membrane-spanning segment. His-198 lines the chlorophyll a pocket. A quinone-binding positions include His-215 and 264 to 265 (SF). Residue His-215 coordinates Fe cation. Position 272 (His-272) interacts with Fe cation. The helical transmembrane segment at 274-288 (FLAAWPVVGIWFTAL) threads the bilayer. [CaMn4O5] cluster-binding residues include His-332, Glu-333, Asp-342, and Ala-344. A propeptide spanning residues 345 to 353 (AIEAPATNG) is cleaved from the precursor.

Belongs to the reaction center PufL/M/PsbA/D family. PSII is composed of 1 copy each of membrane proteins PsbA, PsbB, PsbC, PsbD, PsbE, PsbF, PsbH, PsbI, PsbJ, PsbK, PsbL, PsbM, PsbT, PsbX, PsbY, PsbZ, Psb30/Ycf12, at least 3 peripheral proteins of the oxygen-evolving complex and a large number of cofactors. It forms dimeric complexes. The cofactor is The D1/D2 heterodimer binds P680, chlorophylls that are the primary electron donor of PSII, and subsequent electron acceptors. It shares a non-heme iron and each subunit binds pheophytin, quinone, additional chlorophylls, carotenoids and lipids. D1 provides most of the ligands for the Mn4-Ca-O5 cluster of the oxygen-evolving complex (OEC). There is also a Cl(-1) ion associated with D1 and D2, which is required for oxygen evolution. The PSII complex binds additional chlorophylls, carotenoids and specific lipids.. Post-translationally, tyr-161 forms a radical intermediate that is referred to as redox-active TyrZ, YZ or Y-Z. In terms of processing, C-terminally processed by CTPA; processing is essential to allow assembly of the oxygen-evolving complex and thus photosynthetic growth.

The protein localises to the plastid membrane. It carries out the reaction 2 a plastoquinone + 4 hnu + 2 H2O = 2 a plastoquinol + O2. Photosystem II (PSII) is a light-driven water:plastoquinone oxidoreductase that uses light energy to abstract electrons from H(2)O, generating O(2) and a proton gradient subsequently used for ATP formation. It consists of a core antenna complex that captures photons, and an electron transfer chain that converts photonic excitation into a charge separation. The D1/D2 (PsbA/PsbD) reaction center heterodimer binds P680, the primary electron donor of PSII as well as several subsequent electron acceptors. This chain is Photosystem II protein D1, found in Cuscuta exaltata (Tall dodder).